A 99-amino-acid chain; its full sequence is Large ribosomal subunit protein uL23 (99 aa).

This sequence belongs to the universal ribosomal protein uL23 family. As to quaternary structure, part of the 50S ribosomal subunit. Contacts protein L29, and trigger factor when it is bound to the ribosome.

In terms of biological role, one of the early assembly proteins it binds 23S rRNA. One of the proteins that surrounds the polypeptide exit tunnel on the outside of the ribosome. Forms the main docking site for trigger factor binding to the ribosome. This Pseudomonas aeruginosa (strain LESB58) protein is Large ribosomal subunit protein uL23.